The sequence spans 696 residues: Serotransferrin (696 aa).

Transferrin-like domains lie at 6 to 332 and 346 to 672; these read VRWC…NLRE and VRWC…NLRK. Intrachain disulfides connect cysteine 9/cysteine 47 and cysteine 19/cysteine 38. Arginine 23 carries the dimethylated arginine modification. Asparagine 25 carries N-linked (GlcNAc...) asparagine glycosylation. Positions 62 and 94 each coordinate Fe(3+). Disulfide bonds link cysteine 117–cysteine 198, cysteine 157–cysteine 173, cysteine 160–cysteine 181, cysteine 170–cysteine 183, and cysteine 231–cysteine 245. 4 residues coordinate hydrogencarbonate: threonine 119, arginine 123, alanine 125, and glycine 126. Position 192 (tyrosine 192) interacts with Fe(3+). Histidine 253 contributes to the Fe(3+) binding site. Intrachain disulfides connect cysteine 343–cysteine 605, cysteine 349–cysteine 381, cysteine 359–cysteine 372, cysteine 406–cysteine 682, cysteine 423–cysteine 646, cysteine 456–cysteine 532, cysteine 480–cysteine 673, cysteine 490–cysteine 504, cysteine 501–cysteine 515, cysteine 572–cysteine 586, and cysteine 624–cysteine 629. Serine 374 carries the post-translational modification Phosphoserine. 2 residues coordinate Fe(3+): aspartate 396 and tyrosine 431. Hydrogencarbonate is bound by residues threonine 458, arginine 462, alanine 464, and glycine 465. A glycan (N-linked (GlcNAc...) asparagine) is linked at asparagine 497. Tyrosine 526 serves as a coordination point for Fe(3+). Histidine 594 provides a ligand contact to Fe(3+). Serine 674 carries the post-translational modification Phosphoserine.

The protein belongs to the transferrin family. Monomer. Part of a complex composed of SLC40A1/ferroportin, TF/transferrin and HEPH/hephaestin that transfers iron from cells to transferrin. In terms of tissue distribution, expressed by the liver and secreted in plasma.

The protein localises to the secreted. Transferrins are iron binding transport proteins which can bind two Fe(3+) ions in association with the binding of an anion, usually bicarbonate. It is responsible for the transport of iron from sites of absorption and heme degradation to those of storage and utilization. Serum transferrin may also have a further role in stimulating cell proliferation. In Sus scrofa (Pig), this protein is Serotransferrin (TF).